We begin with the raw amino-acid sequence, 24 residues long: Brevinin-1Pe (24 aa).

A disulfide bridge links cysteine 18 with cysteine 24.

In terms of tissue distribution, expressed by the skin glands.

The protein resides in the secreted. Functionally, antibacterial activity against Gram-positive bacterium S.aureus and Gram-negative bacterium E.coli. Has activity against C.albicans. This Lithobates pipiens (Northern leopard frog) protein is Brevinin-1Pe.